The primary structure comprises 394 residues: Enoyl-CoA delta isomerase 2 (394 aa).

The N-terminal 38 residues, 1–38 (MAMAYLAWRLARRSCPSSLQVTSFPVVQLHMNRTAMRA), are a transit peptide targeting the mitochondrion. Positions 39–124 (SQKDFENSMN…VSSLSPSLES (86 aa)) constitute an ACB domain. Lys51 is modified (N6-acetyllysine; alternate). The residue at position 51 (Lys51) is an N6-succinyllysine; alternate. Lys55 carries the N6-succinyllysine modification. Position 62 is an N6-acetyllysine; alternate (Lys62). Lys62 carries the post-translational modification N6-succinyllysine; alternate. An an acyl-CoA-binding site is contributed by 66–70 (YALYK). N6-succinyllysine occurs at positions 70, 81, and 90. At Lys92 the chain carries N6-acetyllysine; alternate. Lys92 carries the N6-succinyllysine; alternate modification. Position 92 (Lys92) interacts with an acyl-CoA. Ser101 carries the post-translational modification Phosphoserine. Residue Tyr111 coordinates an acyl-CoA. The residue at position 119 (Ser119) is a Phosphoserine. The ECH-like stretch occupies residues 151–322 (TKIMFNRPKK…AQGLVTEVFP (172 aa)). Residue Lys161 is modified to N6-succinyllysine. Position 198–202 (198–202 (SGNDL)) interacts with substrate. Position 289 is an N6-succinyllysine (Lys289). The Microbody targeting signal motif lies at 392-394 (SKL).

This sequence in the C-terminal section; belongs to the enoyl-CoA hydratase/isomerase family. As to expression, abundant in heart, skeletal muscle and liver. Expressed in CD34(+) T-cells and CD34(+) bone marrow cells.

The protein resides in the mitochondrion. The protein localises to the peroxisome matrix. It catalyses the reaction a (3Z)-enoyl-CoA = a 4-saturated (2E)-enoyl-CoA. The enzyme catalyses (3Z)-octenoyl-CoA = (2E)-octenoyl-CoA. The catalysed reaction is a (3E)-enoyl-CoA = a 4-saturated (2E)-enoyl-CoA. It carries out the reaction (2E)-tetradecenoyl-CoA = (3Z)-tetradecenoyl-CoA. It catalyses the reaction (3E)-tetradecenoyl-CoA = (2E)-tetradecenoyl-CoA. The enzyme catalyses (3E)-octenoyl-CoA = (2E)-octenoyl-CoA. The catalysed reaction is (3E)-nonenoyl-CoA = (2E)-nonenoyl-CoA. It participates in lipid metabolism; fatty acid beta-oxidation. Able to isomerize both 3-cis and 3-trans double bonds into the 2-trans form in a range of enoyl-CoA species. Has a preference for 3-trans substrates. In Homo sapiens (Human), this protein is Enoyl-CoA delta isomerase 2 (ECI2).